We begin with the raw amino-acid sequence, 456 residues long: Multidrug resistance protein NorM (456 aa).

The next 12 membrane-spanning stretches (helical) occupy residues 11-31, 53-73, 92-112, 126-146, 159-179, 189-209, 242-262, 268-288, 314-334, 356-376, 385-405, and 417-437; these read LIKLATPVLIASVAQTGMGFV, IWLPSILFGIGLLMALVPVVA, VVLALLISIPIIGVLLQTQFI, TVGYIHAVIFAVPAFLLFQTL, AMVIGFIGLLLNIPLNWIFVY, GVGCGVATTIVYWVMFALLLA, FPVAAALFFEVTLFAVVALLV, IIVAAHQVAINFSSLVFMLPM, SRVGIMVGLALATITAIITVL, LLLFAAVYQCTDAVQVIAAGA, AIFNRTFIAYWILGLPTGYIL, and AQGFWLGFIIGLTAAALMLGV.

The protein belongs to the multi antimicrobial extrusion (MATE) (TC 2.A.66.1) family.

It localises to the cell inner membrane. In terms of biological role, multidrug efflux pump that functions as a Na(+)/drug antiporter. Confers resistance to several drugs, such as norfloxacin, ciprofloxacin, ethidium, kanamycin and streptomycin. The polypeptide is Multidrug resistance protein NorM (norM) (Vibrio parahaemolyticus serotype O3:K6 (strain RIMD 2210633)).